A 396-amino-acid chain; its full sequence is Elongation factor Tu 2 (396 aa).

Residues 10 to 206 (KPHCNIGTIG…AVDAYIPQPE (197 aa)) enclose the tr-type G domain. The segment at 19–26 (GHVDHGKT) is G1. 19–26 (GHVDHGKT) serves as a coordination point for GTP. A Mg(2+)-binding site is contributed by Thr26. The segment at 60–64 (GITIS) is G2. The tract at residues 81–84 (DCPG) is G3. GTP is bound by residues 81–85 (DCPGH) and 136–139 (NKCD). The G4 stretch occupies residues 136–139 (NKCD). The segment at 174-176 (SAL) is G5.

The protein belongs to the TRAFAC class translation factor GTPase superfamily. Classic translation factor GTPase family. EF-Tu/EF-1A subfamily. As to quaternary structure, monomer.

Its subcellular location is the cytoplasm. The catalysed reaction is GTP + H2O = GDP + phosphate + H(+). Functionally, GTP hydrolase that promotes the GTP-dependent binding of aminoacyl-tRNA to the A-site of ribosomes during protein biosynthesis. This is Elongation factor Tu 2 from Rhodopseudomonas palustris (strain BisB5).